Reading from the N-terminus, the 221-residue chain is Phosphoribosylformylglycinamidine synthase subunit PurQ (221 aa).

The Glutamine amidotransferase type-1 domain maps to 5-221; the sequence is TVGIVVFPGS…LYTLRSLITQ (217 aa). Cysteine 89 serves as the catalytic Nucleophile. Active-site residues include histidine 197 and glutamate 199.

As to quaternary structure, part of the FGAM synthase complex composed of 1 PurL, 1 PurQ and 2 PurS subunits.

The protein localises to the cytoplasm. The catalysed reaction is N(2)-formyl-N(1)-(5-phospho-beta-D-ribosyl)glycinamide + L-glutamine + ATP + H2O = 2-formamido-N(1)-(5-O-phospho-beta-D-ribosyl)acetamidine + L-glutamate + ADP + phosphate + H(+). It catalyses the reaction L-glutamine + H2O = L-glutamate + NH4(+). Its pathway is purine metabolism; IMP biosynthesis via de novo pathway; 5-amino-1-(5-phospho-D-ribosyl)imidazole from N(2)-formyl-N(1)-(5-phospho-D-ribosyl)glycinamide: step 1/2. Its function is as follows. Part of the phosphoribosylformylglycinamidine synthase complex involved in the purines biosynthetic pathway. Catalyzes the ATP-dependent conversion of formylglycinamide ribonucleotide (FGAR) and glutamine to yield formylglycinamidine ribonucleotide (FGAM) and glutamate. The FGAM synthase complex is composed of three subunits. PurQ produces an ammonia molecule by converting glutamine to glutamate. PurL transfers the ammonia molecule to FGAR to form FGAM in an ATP-dependent manner. PurS interacts with PurQ and PurL and is thought to assist in the transfer of the ammonia molecule from PurQ to PurL. This Prochlorococcus marinus subsp. pastoris (strain CCMP1986 / NIES-2087 / MED4) protein is Phosphoribosylformylglycinamidine synthase subunit PurQ.